An 89-amino-acid polypeptide reads, in one-letter code: uncharacterized protein (89 aa).

This is an uncharacterized protein from Sinorhizobium fredii (strain NBRC 101917 / NGR234).